A 579-amino-acid chain; its full sequence is Small conductance calcium-activated potassium channel protein 2 (579 aa).

Disordered stretches follow at residues 1-54 and 90-115; these read MSSC…AAAA and TGGG…KKNQ. Gly residues predominate over residues 90–103; sequence TGGGGGGGGSGHGS. A helical transmembrane segment spans residues 138-158; it reads ALIFGMFGIVVMVIETELSWG. Tyr160 is subject to Phosphotyrosine. The chain crosses the membrane as a helical span at residues 168 to 188; it reads LALKCLISLSTIILLGLIIVY. The helical transmembrane segment at 214–234 threads the bilayer; it reads IFFICLEILVCAIHPIPGNYT. A helical membrane pass occupies residues 256–276; that stretch reads IILSIPMFLRLYLIARVMLLH. Residues 305-325 form a helical membrane-spanning segment; that stretch reads LMTICPGTVLLVFSISLWIIA. The pore-forming intramembrane region spans 345–365; the sequence is FLGAMWLISITFLSIGYGDMV. The helical transmembrane segment at 374–394 threads the bilayer; the sequence is VCLLTGIMGAGCTALVVAVVA. The segment at 412 to 488 is calmodulin-binding; it reads DTQLTKRVKN…LVDLAKTQNI (77 aa). Residues 551 to 579 are disordered; the sequence is VTYNAERSRSSSRRRRSSSTAPPTSSESS. Residues 568–579 are compositionally biased toward low complexity; that stretch reads SSTAPPTSSESS.

Belongs to the potassium channel KCNN family. KCa2.2/KCNN2 subfamily. Homodimer. Heteromultimer with KCNN1 and KCNN3. The complex is composed of 4 channel subunits each of which binds to a calmodulin subunit which regulates the channel activity through calcium-binding. Interacts (via N-terminal domain) with MPP2. As to expression, expressed in atrial myocytes (at protein level). Widely expressed.

Its subcellular location is the membrane. It is found in the cytoplasm. It localises to the myofibril. The protein resides in the sarcomere. The protein localises to the z line. It catalyses the reaction K(+)(in) = K(+)(out). Inhibited by bee venom neurotoxin apamin. Inhibited by UCL 1684 and tetraethylammonium (TEA). In terms of biological role, small conductance calcium-activated potassium channel that mediates the voltage-independent transmembrane transfer of potassium across the cell membrane through a constitutive interaction with calmodulin which binds the intracellular calcium allowing its opening. The current is characterized by a voltage-independent activation, an intracellular calcium concentration increase-dependent activation and a single-channel conductance of about 3 picosiemens. Also presents an inwardly rectifying current, thus reducing its already small outward conductance of potassium ions, which is particularly the case when the membrane potential displays positive values, above + 20 mV. The inward rectification could be due to a blockade of the outward current by intracellular divalent cations such as calcium and magnesium and could also be due to an intrinsic property of the channel pore, independent of intracellular divalent ions. There are three positively charged amino acids in the S6 transmembrane domain, close to the pore, that collectively control the conductance and rectification through an electrostatic mechanism. Additionally, electrostatic contributions from these residues also play an important role in determining the intrinsic open probability of the channel in the absence of calcium, affecting the apparent calcium affinity for activation. Forms an heteromeric complex with calmodulin, which is constitutively associated in a calcium-independent manner. Channel opening is triggered when calcium binds the calmodulin resulting in a rotary movement leading to the formation of the dimeric complex to open the gate. Plays a role in the repolarization phase of cardiac action potential. In Homo sapiens (Human), this protein is Small conductance calcium-activated potassium channel protein 2.